We begin with the raw amino-acid sequence, 945 residues long: Isoleucine--tRNA ligase (945 aa).

The 'HIGH' region signature appears at 66 to 76 (PYANGDIHLGH). Residue Glu-581 coordinates L-isoleucyl-5'-AMP. Positions 622 to 626 (KMSKS) match the 'KMSKS' region motif. Lys-625 serves as a coordination point for ATP. Zn(2+)-binding residues include Cys-908, Cys-911, Cys-928, and Cys-931.

It belongs to the class-I aminoacyl-tRNA synthetase family. IleS type 1 subfamily. Monomer. The cofactor is Zn(2+).

The protein resides in the cytoplasm. The enzyme catalyses tRNA(Ile) + L-isoleucine + ATP = L-isoleucyl-tRNA(Ile) + AMP + diphosphate. In terms of biological role, catalyzes the attachment of isoleucine to tRNA(Ile). As IleRS can inadvertently accommodate and process structurally similar amino acids such as valine, to avoid such errors it has two additional distinct tRNA(Ile)-dependent editing activities. One activity is designated as 'pretransfer' editing and involves the hydrolysis of activated Val-AMP. The other activity is designated 'posttransfer' editing and involves deacylation of mischarged Val-tRNA(Ile). The polypeptide is Isoleucine--tRNA ligase (Burkholderia vietnamiensis (strain G4 / LMG 22486) (Burkholderia cepacia (strain R1808))).